The primary structure comprises 208 residues: Small ribosomal subunit protein uS4 (208 aa).

Residues 97 to 158 form the S4 RNA-binding domain; the sequence is TRLDNVIYRM…RAQKYLCVQE (62 aa).

Belongs to the universal ribosomal protein uS4 family. As to quaternary structure, part of the 30S ribosomal subunit. Contacts protein S5. The interaction surface between S4 and S5 is involved in control of translational fidelity.

Functionally, one of the primary rRNA binding proteins, it binds directly to 16S rRNA where it nucleates assembly of the body of the 30S subunit. In terms of biological role, with S5 and S12 plays an important role in translational accuracy. The protein is Small ribosomal subunit protein uS4 of Xylella fastidiosa (strain M23).